The primary structure comprises 129 residues: Natriuretic peptides B (129 aa).

Positions 1-26 (MDPQTALSRALLLLLFLHLSLLGCRS) are cleaved as a signal peptide. Cysteines 107 and 123 form a disulfide.

Belongs to the natriuretic peptide family. Post-translationally, the precursor molecule is proteolytically cleaved, possibly by FURIN or CORIN, to produce the active peptide. May undergo further proteolytic cleavage by various proteases such as DPP4, MME and possibly FAP, to give rise to a variety of shorter peptides. May be cleaved at Pro-99 by the prolyl endopeptidase FAP (seprase) activity (in vitro). May be degraded by IDE. During IDE degradation, the resulting products initially increase the activation of NPR1 and can also stimulate NPR2 to produce cGMP before the fragments are completely degraded and inactivated by IDE (in vitro).

Its subcellular location is the secreted. In terms of biological role, cardiac hormone that plays a key role in mediating cardio-renal homeostasis. May also function as a paracrine antifibrotic factor in the heart. Acts by specifically binding and stimulating NPR1 to produce cGMP, which in turn activates effector proteins that drive various biological responses. Involved in regulating the extracellular fluid volume and maintaining the fluid-electrolyte balance through natriuresis, diuresis, vasorelaxation, and inhibition of renin and aldosterone secretion. Binds the clearance receptor NPR3. In Bos taurus (Bovine), this protein is Natriuretic peptides B (NPPB).